Consider the following 399-residue polypeptide: MASAAAGEAEETTRLRKPRFSFEENQILIREVRAHYPQLYGAQSRRVSVAERRRVWDGIAAKINGITSWKRTGQEVQKRWNDFKRRTKEKLARVPHSTQGAGPAAEDAFSAEEETIFAILGPGVAAPGAGAGAEEPPAAPSSQPPPPSACPQRYVLSEDRREDRRADTSAHSKAGSSSPEPWARPSCTPQEGGCPRPKERESPPPSALQPVQLPRLALSPPPPAPPLPPPPPLAQVAPSPPSPPPPPRPPPTLSASDPSLDFLRAQQETANAIRELAGTLRQGLAKLSEALSALLPLLPGTPVDSLPPPLPPPPPPPPPPRPVLPPPAPKVEITPEPVSVVAAVVDGAVVAARGVIIAPRSEEGAPRPPPAPLPPHDSPPHKRRKGFPTRKRRGRWKSP.

The Myb-like domain maps to 12-84 (TTRLRKPRFS…EVQKRWNDFK (73 aa)). A Nuclear localization signal motif is present at residues 83–86 (FKRR). 4 disordered regions span residues 87–108 (TKEKLARVPHSTQGAGPAAEDA), 127–261 (PGAG…PSLD), 297–332 (LLPGTPVDSLPPPLPPPPPPPPPPRPVLPPPAPKVE), and 358–399 (APRS…WKSP). Over residues 127–136 (PGAGAGAEEP) the composition is skewed to low complexity. Residues 137 to 149 (PAAPSSQPPPPSA) are compositionally biased toward pro residues. The segment covering 156 to 170 (LSEDRREDRRADTSA) has biased composition (basic and acidic residues). 3 stretches are compositionally biased toward pro residues: residues 219–252 (SPPPPAPPLPPPPPLAQVAPSPPSPPPPPRPPPT), 305–329 (SLPPPLPPPPPPPPPPRPVLPPPAP), and 366–377 (PRPPPAPLPPHD). Over residues 381 to 399 (HKRRKGFPTRKRRGRWKSP) the composition is skewed to basic residues. 2 consecutive short sequence motifs (nuclear localization signal) follow at residues 382–385 (KRRK) and 390–393 (RKRR).

Interacts with PFN1. Homodimer and heterodimer with PFN1.

The protein resides in the nucleus. In terms of biological role, transcriptional repressor; DNA-binding protein that specifically recognizes the core sequence 5'-YAAC[GT]G-3'. Dimerization with PFN1 reduces its DNA-binding capacity. In Homo sapiens (Human), this protein is Myb-related transcription factor, partner of profilin (MYPOP).